Reading from the N-terminus, the 479-residue chain is Calcium uniporter protein, mitochondrial (479 aa).

The N-terminal 54 residues, 1 to 54 (MNHALRRATLGLSPGLRASRLQQSFAKHQIPAVYRCEAASTPLQRAFTTSRCFR), are a transit peptide targeting the mitochondrion. Over 55–323 (QETAAESEKD…DTLAHQGAHR (269 aa)) the chain is Mitochondrial matrix. Disordered stretches follow at residues 56–125 (ETAA…KGRL) and 206–238 (EADQ…HEGP). Residues 59 to 79 (AESEKDDAARREEQSERARKR) adopt a coiled-coil conformation. Over residues 60 to 75 (ESEKDDAARREEQSER) the composition is skewed to basic and acidic residues. The span at 83-93 (NVTSGSSAQTL) shows a compositional bias: polar residues. Basic and acidic residues-rich tracts occupy residues 94 to 122 (ENDR…DMKK) and 206 to 224 (EADQ…KKDN). Residues 324 to 344 (LAQGGFAALAGWWGVVYYVTF) traverse the membrane as a helical segment. Residues 345 to 354 (HTQAGWDLVE) are Mitochondrial intermembrane-facing. A Selectivity filter motif is present at residues 350–358 (WDLVEPVTY). E354 serves as a coordination point for Ca(2+). A helical membrane pass occupies residues 355–375 (PVTYLAGLTTVMGAYLWFLYI). Residues 376 to 479 (SRDLSYKAAM…GSSDKIKKKQ (104 aa)) are Mitochondrial matrix-facing. Positions 445–462 (KVLEEEKQGRDGTKVTEG) are enriched in basic and acidic residues. Residues 445 to 479 (KVLEEEKQGRDGTKVTEGKDEDDGPGSSDKIKKKQ) form a disordered region.

The protein belongs to the MCU (TC 1.A.77) family. As to quaternary structure, homotetramer, assembles in a dimer or dimers configuration with two interfaces.

It localises to the mitochondrion inner membrane. It catalyses the reaction Ca(2+)(in) = Ca(2+)(out). Its function is as follows. Highly selective calcium channel localized to the inner mitochondrial membrane, which mediates calcium uptake into the mitochondrial matrix. Mitochondrial calcium homeostasis plays key roles in cellular physiology and regulates ATP production, cytoplasmic calcium signals and activation of cell death pathways. Sufficient to operate as a pore-forming channel without the need of calcium-sensor or auxiliary subunit. This is Calcium uniporter protein, mitochondrial from Gibberella zeae (strain ATCC MYA-4620 / CBS 123657 / FGSC 9075 / NRRL 31084 / PH-1) (Wheat head blight fungus).